The primary structure comprises 217 residues: 3,4-dihydroxy-2-butanone 4-phosphate synthase (217 aa).

Residues 37 to 38 (RE), Asp-42, 150 to 154 (RRGHT), and Glu-174 contribute to the D-ribulose 5-phosphate site. Residue Glu-38 participates in Mg(2+) binding. Residue His-153 participates in Mg(2+) binding.

It belongs to the DHBP synthase family. In terms of assembly, homodimer. The cofactor is Mg(2+). Requires Mn(2+) as cofactor.

It carries out the reaction D-ribulose 5-phosphate = (2S)-2-hydroxy-3-oxobutyl phosphate + formate + H(+). Its pathway is cofactor biosynthesis; riboflavin biosynthesis; 2-hydroxy-3-oxobutyl phosphate from D-ribulose 5-phosphate: step 1/1. Its function is as follows. Catalyzes the conversion of D-ribulose 5-phosphate to formate and 3,4-dihydroxy-2-butanone 4-phosphate. The sequence is that of 3,4-dihydroxy-2-butanone 4-phosphate synthase from Shewanella sediminis (strain HAW-EB3).